Consider the following 192-residue polypeptide: PTS-dependent dihydroxyacetone kinase, ADP-binding subunit DhaL (192 aa).

The 185-residue stretch at 5 to 189 (DTTIEWLGKF…SAYLFETLLE (185 aa)) folds into the DhaL domain. The Mg(2+) site is built by aspartate 29, aspartate 34, and aspartate 36. Residues 37-40 (HGAN), 78-79 (AS), glycine 115, methionine 124, arginine 161, and 174-176 (DPG) contribute to the ADP site.

In terms of assembly, homodimer. The dihydroxyacetone kinase complex is composed of a homodimer of DhaM, a homodimer of DhaK and the subunit DhaL. The cofactor is Mg(2+).

It localises to the cytoplasm. The enzyme catalyses dihydroxyacetone + phosphoenolpyruvate = dihydroxyacetone phosphate + pyruvate. It functions in the pathway polyol metabolism; glycerol degradation. ADP-binding subunit of the dihydroxyacetone kinase, which is responsible for the phosphoenolpyruvate (PEP)-dependent phosphorylation of dihydroxyacetone. DhaL-ADP is converted to DhaL-ATP via a phosphoryl group transfer from DhaM and transmits it to dihydroxyacetone binds to DhaK. This Lactococcus lactis subsp. lactis (strain IL1403) (Streptococcus lactis) protein is PTS-dependent dihydroxyacetone kinase, ADP-binding subunit DhaL.